We begin with the raw amino-acid sequence, 113 residues long: Nucleoid-associated protein Csac_1593 (113 aa).

It belongs to the YbaB/EbfC family. In terms of assembly, homodimer.

The protein localises to the cytoplasm. It localises to the nucleoid. Functionally, binds to DNA and alters its conformation. May be involved in regulation of gene expression, nucleoid organization and DNA protection. This chain is Nucleoid-associated protein Csac_1593, found in Caldicellulosiruptor saccharolyticus (strain ATCC 43494 / DSM 8903 / Tp8T 6331).